Here is a 245-residue protein sequence, read N- to C-terminus: Acetylglutamate kinase (245 aa).

Residues glycine 41–glycine 42, arginine 63, and asparagine 156 contribute to the substrate site.

The protein belongs to the acetylglutamate kinase family. ArgB subfamily.

The protein localises to the cytoplasm. The catalysed reaction is N-acetyl-L-glutamate + ATP = N-acetyl-L-glutamyl 5-phosphate + ADP. It participates in amino-acid biosynthesis; L-arginine biosynthesis; N(2)-acetyl-L-ornithine from L-glutamate: step 2/4. In terms of biological role, catalyzes the ATP-dependent phosphorylation of N-acetyl-L-glutamate. The chain is Acetylglutamate kinase from Staphylococcus epidermidis (strain ATCC 35984 / DSM 28319 / BCRC 17069 / CCUG 31568 / BM 3577 / RP62A).